Here is a 514-residue protein sequence, read N- to C-terminus: ATP synthase subunit alpha (514 aa).

170 to 177 is a binding site for ATP; that stretch reads GDRQIGKT.

This sequence belongs to the ATPase alpha/beta chains family. As to quaternary structure, F-type ATPases have 2 components, CF(1) - the catalytic core - and CF(0) - the membrane proton channel. CF(1) has five subunits: alpha(3), beta(3), gamma(1), delta(1), epsilon(1). CF(0) has three main subunits: a(1), b(2) and c(9-12). The alpha and beta chains form an alternating ring which encloses part of the gamma chain. CF(1) is attached to CF(0) by a central stalk formed by the gamma and epsilon chains, while a peripheral stalk is formed by the delta and b chains.

Its subcellular location is the cell inner membrane. The enzyme catalyses ATP + H2O + 4 H(+)(in) = ADP + phosphate + 5 H(+)(out). In terms of biological role, produces ATP from ADP in the presence of a proton gradient across the membrane. The alpha chain is a regulatory subunit. The protein is ATP synthase subunit alpha of Alcanivorax borkumensis (strain ATCC 700651 / DSM 11573 / NCIMB 13689 / SK2).